The chain runs to 349 residues: MPLVAHNALPTFERLRRDGITVLSTERAANQEIRELHVGLLNMMPDAALEATERQFYRLVGESNPIAQFYMHPFTLETLPRGDKARAHIGRHYEKFEDIRAAGLDALIITGANVSHANLADEAFWQPLIEVIDWAWDNVTSTLCSCLATHAVMQFRYAQTRVLQPRKIWGVFEHRVTDVRHPLVADVNTRFDVPHSRWNDVSRAQFEAAGVKVLVESEEAGVHLAVSGDGLRTVFFQGHPEYDTVSLLKEYKRDLLLATTGALAEPPFPRRYFDRKAQAFLAEFARRTRVGETLVFPEAEVVPLLDNTWHDTAEAVIGNWIGCVYQVTHRERGLPFMPGVDPDNPLGLA.

The Acyl-thioester intermediate role is filled by Cys146. Residues Lys167 and Ser196 each contribute to the substrate site. His239 (proton acceptor) is an active-site residue. Residue Glu241 is part of the active site. Arg253 serves as a coordination point for substrate.

The protein belongs to the MetA family.

The protein localises to the cytoplasm. The enzyme catalyses L-homoserine + succinyl-CoA = O-succinyl-L-homoserine + CoA. It participates in amino-acid biosynthesis; L-methionine biosynthesis via de novo pathway; O-succinyl-L-homoserine from L-homoserine: step 1/1. Its function is as follows. Transfers a succinyl group from succinyl-CoA to L-homoserine, forming succinyl-L-homoserine. In vitro, can also use glutaryl-CoA as acyl donor. In Thiobacillus denitrificans (strain ATCC 25259 / T1), this protein is Homoserine O-succinyltransferase.